A 332-amino-acid polypeptide reads, in one-letter code: Biotin synthase (332 aa).

Residues 53–282 enclose the Radical SAM core domain; sequence HFGKKVKLNM…TKEIRISGGR (230 aa). 3 residues coordinate [4Fe-4S] cluster: Cys71, Cys75, and Cys78. Residues Cys115, Cys147, Cys207, and Arg277 each contribute to the [2Fe-2S] cluster site.

The protein belongs to the radical SAM superfamily. Biotin synthase family. In terms of assembly, homodimer. [4Fe-4S] cluster is required as a cofactor. The cofactor is [2Fe-2S] cluster.

The enzyme catalyses (4R,5S)-dethiobiotin + (sulfur carrier)-SH + 2 reduced [2Fe-2S]-[ferredoxin] + 2 S-adenosyl-L-methionine = (sulfur carrier)-H + biotin + 2 5'-deoxyadenosine + 2 L-methionine + 2 oxidized [2Fe-2S]-[ferredoxin]. Its pathway is cofactor biosynthesis; biotin biosynthesis; biotin from 7,8-diaminononanoate: step 2/2. Its function is as follows. Catalyzes the conversion of dethiobiotin (DTB) to biotin by the insertion of a sulfur atom into dethiobiotin via a radical-based mechanism. The protein is Biotin synthase of Bacillus cereus (strain AH187).